The following is a 522-amino-acid chain: Putative cysteine ligase BshC (522 aa).

Residues 436–469 (SWAQAEKAKALKQLEDIEKKLRKAEERKHDDVIK) are a coiled coil.

It belongs to the BshC family.

The chain is Putative cysteine ligase BshC from Cytophaga hutchinsonii (strain ATCC 33406 / DSM 1761 / CIP 103989 / NBRC 15051 / NCIMB 9469 / D465).